The following is a 73-amino-acid chain: DNA gyrase inhibitor YacG (73 aa).

Residues Cys12, Cys15, Cys31, and Cys35 each contribute to the Zn(2+) site. Residues 47-73 are disordered; sequence DYAIPGEPIDPAEPSEDRNGAEGPPTD.

This sequence belongs to the DNA gyrase inhibitor YacG family. Interacts with GyrB. Zn(2+) serves as cofactor.

Functionally, inhibits all the catalytic activities of DNA gyrase by preventing its interaction with DNA. Acts by binding directly to the C-terminal domain of GyrB, which probably disrupts DNA binding by the gyrase. The chain is DNA gyrase inhibitor YacG from Methylococcus capsulatus (strain ATCC 33009 / NCIMB 11132 / Bath).